A 525-amino-acid chain; its full sequence is Vanin-like protein 2 (525 aa).

Residues 1–27 form the signal peptide; that stretch reads MAKNYWGFFLFCLALGLMLNLSQQASL. N-linked (GlcNAc...) asparagine glycans are attached at residues Asn20 and Asn61. Residues 33–303 form the CN hydrolase domain; sequence YTAGVVEFEP…RSIYVARVPK (271 aa). The active-site Proton acceptor is the Glu72. N-linked (GlcNAc...) asparagine glycosylation is found at Asn99, Asn116, and Asn124. Catalysis depends on Lys167, which acts as the Proton donor. Asn176 carries N-linked (GlcNAc...) asparagine glycosylation. The Nucleophile role is filled by Cys199. Asn333, Asn348, and Asn375 each carry an N-linked (GlcNAc...) asparagine glycan.

It belongs to the carbon-nitrogen hydrolase superfamily. BTD/VNN family. In terms of tissue distribution, expressed in third instar larvae.

It localises to the secreted. The protein is Vanin-like protein 2 of Drosophila melanogaster (Fruit fly).